The primary structure comprises 453 residues: MPLPIVAIIGRPNVGKSTIVNRLAESKDAIVHDEPGITRDRTYRNAYWEDREFQVVDTGGLVFDDNTEFLPLIREQAMAALVEASVAIFVVDGQTGLTGGDEEIAQWLRQQTIPILLAVNKCESITEGLTQAAMFWELGLGEPYPISGIHGNGTGELLDDLITYLPTQGEITETNQTKIAIVGRPNVGKSSLLNSFIGEKRAIVSPISGTTRDAIDTVVERNGKTYRLIDTAGIRKKKNVEYGAEFFGINRAFKAIRRAEVVMFVIDALDGVTEQDQKLANRIIEDGRACVIVVNKWDAIEKDNYTIYTYEQEVRSRLYFVEWAEMIFVSALTGKRVEKIINLIDNAANEYQRRVTTSVINEVLEEAISWNSPPTNRQGRQGKIYYGTQVTSKPPTIALFVNDPKRFPENYRRYIQSQFRQHLGFTGTPIRLLWRGKKAREVEQNTVNRATRV.

2 EngA-type G domains span residues 4-169 (PIVA…PTQG) and 177-352 (TKIA…NEYQ). GTP contacts are provided by residues 10–17 (GRPNVGKS), 57–61 (DTGGL), 120–123 (NKCE), 183–190 (GRPNVGKS), 230–234 (DTAGI), and 295–298 (NKWD). Residues 353–438 (RRVTTSVINE…PIRLLWRGKK (86 aa)) form the KH-like domain.

This sequence belongs to the TRAFAC class TrmE-Era-EngA-EngB-Septin-like GTPase superfamily. EngA (Der) GTPase family. In terms of assembly, associates with the 50S ribosomal subunit.

In terms of biological role, GTPase that plays an essential role in the late steps of ribosome biogenesis. The chain is GTPase Der from Trichodesmium erythraeum (strain IMS101).